Reading from the N-terminus, the 306-residue chain is Ornithine carbamoyltransferase (306 aa).

Residues S46–T49, Q73, R97, and H124–Q127 contribute to the carbamoyl phosphate site. Residues N156, D220, and S224–M225 each bind L-ornithine. Carbamoyl phosphate is bound by residues C260 to L261 and R288.

It belongs to the aspartate/ornithine carbamoyltransferase superfamily. OTCase family.

It is found in the cytoplasm. The enzyme catalyses carbamoyl phosphate + L-ornithine = L-citrulline + phosphate + H(+). Its pathway is amino-acid degradation; L-arginine degradation via ADI pathway; carbamoyl phosphate from L-arginine: step 2/2. Reversibly catalyzes the transfer of the carbamoyl group from carbamoyl phosphate (CP) to the N(epsilon) atom of ornithine (ORN) to produce L-citrulline. In Campylobacter jejuni subsp. jejuni serotype O:6 (strain 81116 / NCTC 11828), this protein is Ornithine carbamoyltransferase.